A 558-amino-acid polypeptide reads, in one-letter code: Formate--tetrahydrofolate ligase (558 aa).

66-73 lines the ATP pocket; it reads TPAGEGKT.

This sequence belongs to the formate--tetrahydrofolate ligase family.

The catalysed reaction is (6S)-5,6,7,8-tetrahydrofolate + formate + ATP = (6R)-10-formyltetrahydrofolate + ADP + phosphate. It participates in one-carbon metabolism; tetrahydrofolate interconversion. In Neisseria meningitidis serogroup C (strain 053442), this protein is Formate--tetrahydrofolate ligase.